The chain runs to 102 residues: Small ribosomal subunit protein uS10 (102 aa).

Belongs to the universal ribosomal protein uS10 family. As to quaternary structure, part of the 30S ribosomal subunit.

Involved in the binding of tRNA to the ribosomes. The chain is Small ribosomal subunit protein uS10 from Geobacter metallireducens (strain ATCC 53774 / DSM 7210 / GS-15).